A 388-amino-acid polypeptide reads, in one-letter code: Fructose-bisphosphate aldolase, chloroplastic (388 aa).

A chloroplast-targeting transit peptide spans 1–38; that stretch reads MASATLLKSSFLPKKSEWGATRQAAAPKPVTVSMVVRA. Arginine 72 is a binding site for substrate. Glutamate 215 (proton acceptor) is an active-site residue. Lysine 257 (schiff-base intermediate with dihydroxyacetone-P) is an active-site residue. Substrate contacts are provided by residues 299 to 301 and arginine 329; that span reads SGG.

It belongs to the class I fructose-bisphosphate aldolase family. As to quaternary structure, homotetramer. Expressed in leaf mesophyll cells.

The protein localises to the plastid. Its subcellular location is the chloroplast. It localises to the plastoglobule. It carries out the reaction beta-D-fructose 1,6-bisphosphate = D-glyceraldehyde 3-phosphate + dihydroxyacetone phosphate. The protein operates within carbohydrate degradation; glycolysis; D-glyceraldehyde 3-phosphate and glycerone phosphate from D-glucose: step 4/4. Plays a key role in glycolysis and gluconeogenesis. The polypeptide is Fructose-bisphosphate aldolase, chloroplastic (Oryza sativa subsp. japonica (Rice)).